Consider the following 486-residue polypeptide: 2-succinylbenzoate--CoA ligase (486 aa).

Belongs to the ATP-dependent AMP-binding enzyme family. MenE subfamily.

The catalysed reaction is 2-succinylbenzoate + ATP + CoA = 2-succinylbenzoyl-CoA + AMP + diphosphate. It participates in quinol/quinone metabolism; 1,4-dihydroxy-2-naphthoate biosynthesis; 1,4-dihydroxy-2-naphthoate from chorismate: step 5/7. It functions in the pathway quinol/quinone metabolism; menaquinone biosynthesis. Its function is as follows. Converts 2-succinylbenzoate (OSB) to 2-succinylbenzoyl-CoA (OSB-CoA). This Bacillus pumilus (strain SAFR-032) protein is 2-succinylbenzoate--CoA ligase.